The following is a 347-amino-acid chain: Anthranilate phosphoribosyltransferase (347 aa).

5-phospho-alpha-D-ribose 1-diphosphate is bound by residues Gly88, 91–92, Thr96, 98–101, 116–124, and Ser128; these read GD, NIST, and KHGGRSVSS. Gly88 provides a ligand contact to anthranilate. Ser100 serves as a coordination point for Mg(2+). Position 174 (Arg174) interacts with anthranilate. Asp233 and Glu234 together coordinate Mg(2+).

This sequence belongs to the anthranilate phosphoribosyltransferase family. As to quaternary structure, homodimer. The cofactor is Mg(2+).

It catalyses the reaction N-(5-phospho-beta-D-ribosyl)anthranilate + diphosphate = 5-phospho-alpha-D-ribose 1-diphosphate + anthranilate. The protein operates within amino-acid biosynthesis; L-tryptophan biosynthesis; L-tryptophan from chorismate: step 2/5. Catalyzes the transfer of the phosphoribosyl group of 5-phosphorylribose-1-pyrophosphate (PRPP) to anthranilate to yield N-(5'-phosphoribosyl)-anthranilate (PRA). This is Anthranilate phosphoribosyltransferase from Polaromonas sp. (strain JS666 / ATCC BAA-500).